The sequence spans 228 residues: Octanoyltransferase (228 aa).

Positions 37 to 217 (AGGPDTLLLL…AVCDALDGRL (181 aa)) constitute a BPL/LPL catalytic domain. Residues 75-82 (RGGKITWH), 147-149 (AIG), and 160-162 (GFA) contribute to the substrate site. The active-site Acyl-thioester intermediate is cysteine 178.

It belongs to the LipB family.

The protein localises to the cytoplasm. The catalysed reaction is octanoyl-[ACP] + L-lysyl-[protein] = N(6)-octanoyl-L-lysyl-[protein] + holo-[ACP] + H(+). Its pathway is protein modification; protein lipoylation via endogenous pathway; protein N(6)-(lipoyl)lysine from octanoyl-[acyl-carrier-protein]: step 1/2. Functionally, catalyzes the transfer of endogenously produced octanoic acid from octanoyl-acyl-carrier-protein onto the lipoyl domains of lipoate-dependent enzymes. Lipoyl-ACP can also act as a substrate although octanoyl-ACP is likely to be the physiological substrate. The chain is Octanoyltransferase from Mycolicibacterium smegmatis (strain ATCC 700084 / mc(2)155) (Mycobacterium smegmatis).